The primary structure comprises 210 residues: Somatotropin (210 aa).

Residues 1–22 (MAKALVLLSLVLVSVFVNNGTA) form the signal peptide. His-38 provides a ligand contact to Zn(2+). The cysteines at positions 71 and 183 are disulfide-linked. Position 192 (Glu-192) interacts with Zn(2+). A disulfide bridge connects residues Cys-200 and Cys-208.

The protein belongs to the somatotropin/prolactin family.

The protein localises to the secreted. Growth hormone plays an important role in growth control and is involved in the regulation of several anabolic processes. Implicated as an osmoregulatory substance important for seawater adaptation. The chain is Somatotropin (gh) from Misgurnus mizolepis (Chinese weatherloach).